Here is a 750-residue protein sequence, read N- to C-terminus: Serine/threonine-protein kinase PknG (750 aa).

Positions 1–66 (MAKASETERS…PQDRMATTSR (66 aa)) are disordered. Positions 17–34 (ADAQTATSATVRPLSTQA) are enriched in polar residues. The 246-residue stretch at 151 to 396 (YEVKGCIAHG…EMSAQLTGVL (246 aa)) folds into the Protein kinase domain. ATP contacts are provided by residues 157–165 (IAHGGLGWI) and Lys181. The Proton acceptor role is filled by Asp276.

This sequence belongs to the protein kinase superfamily. Ser/Thr protein kinase family. Autophosphorylated.

The enzyme catalyses L-seryl-[protein] + ATP = O-phospho-L-seryl-[protein] + ADP + H(+). It carries out the reaction L-threonyl-[protein] + ATP = O-phospho-L-threonyl-[protein] + ADP + H(+). This chain is Serine/threonine-protein kinase PknG (pknG), found in Mycobacterium bovis (strain ATCC BAA-935 / AF2122/97).